We begin with the raw amino-acid sequence, 69 residues long: Large ribosomal subunit protein uL29 (69 aa).

The protein belongs to the universal ribosomal protein uL29 family.

The protein is Large ribosomal subunit protein uL29 of Rhodopseudomonas palustris (strain BisB5).